The primary structure comprises 348 residues: Trans-L-3-hydroxyproline dehydratase (348 aa).

Cysteine 101 acts as the Proton acceptor in catalysis. Substrate-binding positions include 102 to 103 (GH), aspartate 263, and 268 to 269 (GS).

The protein belongs to the proline racemase family. Homodimer.

It catalyses the reaction trans-3-hydroxy-L-proline = 1-pyrroline-2-carboxylate + H2O. Its function is as follows. Catalyzes the dehydration of trans-3-hydroxy-L-proline to delta-1-pyrroline-2-carboxylate (Pyr2C). The protein is Trans-L-3-hydroxyproline dehydratase (l3hypdh) of Xenopus tropicalis (Western clawed frog).